We begin with the raw amino-acid sequence, 190 residues long: Dual specificity protein phosphatase 21 (190 aa).

A Tyrosine-protein phosphatase domain is found at 21–162; that stretch reads SFSQITRSLF…LINYEFKLFN (142 aa). Residues 43–128 are sufficient for mitochondrial localization; the sequence is LSSNRITAIV…AYLMKYHSMS (86 aa). Cys-106 acts as the Phosphocysteine intermediate in catalysis.

Belongs to the protein-tyrosine phosphatase family. Non-receptor class dual specificity subfamily. Microtubule inner protein component of sperm flagellar doublet microtubules. Expressed in testis.

It is found in the cytoplasm. It localises to the nucleus. The protein localises to the mitochondrion inner membrane. Its subcellular location is the cytoskeleton. The protein resides in the flagellum axoneme. It catalyses the reaction O-phospho-L-tyrosyl-[protein] + H2O = L-tyrosyl-[protein] + phosphate. It carries out the reaction O-phospho-L-seryl-[protein] + H2O = L-seryl-[protein] + phosphate. The catalysed reaction is O-phospho-L-threonyl-[protein] + H2O = L-threonyl-[protein] + phosphate. Its function is as follows. Protein phosphatase component of the sperm flagellar doublet microtubules. May act as a regulator of sperm motility by mediating dephosphorylation of sperm doublet microtubule proteins. Can dephosphorylate single and diphosphorylated synthetic MAPK peptides, with preference for the phosphotyrosine and diphosphorylated forms over phosphothreonine. The polypeptide is Dual specificity protein phosphatase 21 (DUSP21) (Homo sapiens (Human)).